A 636-amino-acid chain; its full sequence is MPKHEQYFDYVKINLASPERIRQWGERILKNGEIVGKITKPETINYRTLKPEMDGLFCEKIFGPVKDWECHCGKYKSIFYRGVICERCGVEITESQVRRHRMGYIELAAPVTHIWYLKGIPSYISILLNKKVKEIEQVVYFNAYVVLNPGKSDLLNYGVILTEDDEKWPYIEEKLYTKELMDVELGIGAEAIQRLLSDLDLQAEAKTIREILISNSDKKKNTQKRAKLIKKLRIINNFIATKAKPEWMILSLIPVIPPDLRPMVQLDGGRFATSDLNDLYRRVINRNNRLLRLQEVFAPEIVVRNEKRILQEAVDALIDNGRRGRIVVGAKNRPLKSLSDIIEGKQGRFRQNLLGKRVDYSGRSVIVVGLQLKLYQCGLPWEMAIELFQPFVIHRLIHQGLVNNIKAAKKLIQSNDPIIRDILEEVIQNHPVLLNRAPTLHRLSIQAFEPILVEGRAIQLHPLVCPAFNADFDGDQMAVHVPLSLEAQTEARLLMLASNNLLSPATGQPIVTPSQDMVLGCYYLTVDNLKNQKGKGSYFINSEDVLIAYEQQRIDLHSYIWVRFDTFSFDDILEEKNIQQVLYKREIDEFGTVIKVYNTRRIREDKDGFCLTQYIITTAGRVLFNKVVQKALIMEI.

The Zn(2+) site is built by Cys70, Cys72, Cys85, and Cys88. Mg(2+)-binding residues include Asp471, Asp473, and Asp475.

Belongs to the RNA polymerase beta' chain family. RpoC1 subfamily. The cofactor is Mg(2+). Zn(2+) is required as a cofactor.

It is found in the plastid. It localises to the cyanelle. The enzyme catalyses RNA(n) + a ribonucleoside 5'-triphosphate = RNA(n+1) + diphosphate. DNA-dependent RNA polymerase catalyzes the transcription of DNA into RNA using the four ribonucleoside triphosphates as substrates. The chain is DNA-directed RNA polymerase subunit beta' from Cyanophora paradoxa.